The sequence spans 258 residues: Imidazole glycerol phosphate synthase subunit HisF (258 aa).

Active-site residues include aspartate 12 and aspartate 131.

It belongs to the HisA/HisF family. As to quaternary structure, heterodimer of HisH and HisF.

It localises to the cytoplasm. The enzyme catalyses 5-[(5-phospho-1-deoxy-D-ribulos-1-ylimino)methylamino]-1-(5-phospho-beta-D-ribosyl)imidazole-4-carboxamide + L-glutamine = D-erythro-1-(imidazol-4-yl)glycerol 3-phosphate + 5-amino-1-(5-phospho-beta-D-ribosyl)imidazole-4-carboxamide + L-glutamate + H(+). It participates in amino-acid biosynthesis; L-histidine biosynthesis; L-histidine from 5-phospho-alpha-D-ribose 1-diphosphate: step 5/9. Functionally, IGPS catalyzes the conversion of PRFAR and glutamine to IGP, AICAR and glutamate. The HisF subunit catalyzes the cyclization activity that produces IGP and AICAR from PRFAR using the ammonia provided by the HisH subunit. The protein is Imidazole glycerol phosphate synthase subunit HisF of Arthrobacter sp. (strain FB24).